The following is a 739-amino-acid chain: Phosphoribosylformylglycinamidine synthase subunit PurL (739 aa).

His54 is an active-site residue. Positions 57 and 96 each coordinate ATP. Residue Glu98 participates in Mg(2+) binding. Residues 99 to 102 (SHNH) and Arg121 contribute to the substrate site. His100 functions as the Proton acceptor in the catalytic mechanism. Mg(2+) is bound at residue Asp122. Gln245 contacts substrate. A Mg(2+)-binding site is contributed by Asp273. Residue 317–319 (ESQ) participates in substrate binding. ATP contacts are provided by Asp500 and Gly537. A Mg(2+)-binding site is contributed by Asn538. Ser540 is a substrate binding site.

Belongs to the FGAMS family. As to quaternary structure, monomer. Part of the FGAM synthase complex composed of 1 PurL, 1 PurQ and 2 PurS subunits.

It localises to the cytoplasm. It catalyses the reaction N(2)-formyl-N(1)-(5-phospho-beta-D-ribosyl)glycinamide + L-glutamine + ATP + H2O = 2-formamido-N(1)-(5-O-phospho-beta-D-ribosyl)acetamidine + L-glutamate + ADP + phosphate + H(+). The protein operates within purine metabolism; IMP biosynthesis via de novo pathway; 5-amino-1-(5-phospho-D-ribosyl)imidazole from N(2)-formyl-N(1)-(5-phospho-D-ribosyl)glycinamide: step 1/2. Part of the phosphoribosylformylglycinamidine synthase complex involved in the purines biosynthetic pathway. Catalyzes the ATP-dependent conversion of formylglycinamide ribonucleotide (FGAR) and glutamine to yield formylglycinamidine ribonucleotide (FGAM) and glutamate. The FGAM synthase complex is composed of three subunits. PurQ produces an ammonia molecule by converting glutamine to glutamate. PurL transfers the ammonia molecule to FGAR to form FGAM in an ATP-dependent manner. PurS interacts with PurQ and PurL and is thought to assist in the transfer of the ammonia molecule from PurQ to PurL. The protein is Phosphoribosylformylglycinamidine synthase subunit PurL of Bacillus cereus (strain AH187).